We begin with the raw amino-acid sequence, 596 residues long: Nucleotidyltransferase lcsQ (596 aa).

Residues 1–22 (MLLRLSPSRMALKRKLDSFLRN) constitute a mitochondrion transit peptide. Residues 475 to 504 (IVAHPGKPSQPADVPETPLSSGASKSKNLD) are disordered.

Belongs to the tRNA nucleotidyltransferase/poly(A) polymerase family.

The protein resides in the mitochondrion. Its function is as follows. Nucleotidyltransferase; part of the gene cluster that mediates the biosynthesis of the lipopeptide antibiotics leucinostatins that show extensive biological activities, including antimalarial, antiviral, antibacterial, antifungal, and antitumor activities, as well as phytotoxic. The function of lcsQ within the leucinostatins biosynthesis has not been identified yet. The chain is Nucleotidyltransferase lcsQ from Purpureocillium lilacinum (Paecilomyces lilacinus).